A 29-amino-acid polypeptide reads, in one-letter code: Cyclotide vibi-D (29 aa).

The segment at residues 1 to 29 (GLPVCGETCFGGRCNTPGCTCSYPICTRN) is a cross-link (cyclopeptide (Gly-Asn)). 3 disulfides stabilise this stretch: C5-C19, C9-C21, and C14-C26.

This is a cyclic peptide.

Its function is as follows. Probably participates in a plant defense mechanism. Has moderate levels of cytotoxic activity, active against a human lymphoma cell line with an IC(50) of &gt;30 uM. The sequence is that of Cyclotide vibi-D from Viola biflora (Yellow wood violet).